Consider the following 352-residue polypeptide: Ion-translocating oxidoreductase complex subunit D (352 aa).

Helical transmembrane passes span 20–40, 42–62, 69–91, and 123–143; these read IMLL…WFFG, GTLF…AIVL, VASH…SIPP, and PAMI…TSWL. An FMN phosphoryl threonine modification is found at threonine 187. The next 5 membrane-spanning stretches (helical) occupy residues 215-235, 242-262, 267-287, 301-321, and 322-342; these read LAGV…VFLL, WHIP…GWLF, LASP…FFIL, LIFG…GGYP, and DGVA…DYYT.

This sequence belongs to the NqrB/RnfD family. In terms of assembly, the complex is composed of six subunits: RsxA, RsxB, RsxC, RsxD, RsxE and RsxG. FMN serves as cofactor.

It is found in the cell inner membrane. Part of a membrane-bound complex that couples electron transfer with translocation of ions across the membrane. Required to maintain the reduced state of SoxR. The chain is Ion-translocating oxidoreductase complex subunit D from Salmonella paratyphi B (strain ATCC BAA-1250 / SPB7).